The chain runs to 264 residues: ATP synthase subunit a (264 aa).

Helical transmembrane passes span 29–49 (TWHI…LWIF), 90–110 (IAPL…MDMI), 111–131 (PVDW…KVVP), 134–154 (DVNI…YYSI), 177–197 (IPVN…SLAL), 208–228 (LIFI…TLGV), and 235–255 (LIFH…LTIV).

It belongs to the ATPase A chain family. As to quaternary structure, F-type ATPases have 2 components, CF(1) - the catalytic core - and CF(0) - the membrane proton channel. CF(1) has five subunits: alpha(3), beta(3), gamma(1), delta(1), epsilon(1). CF(0) has three main subunits: a(1), b(2) and c(9-12). The alpha and beta chains form an alternating ring which encloses part of the gamma chain. CF(1) is attached to CF(0) by a central stalk formed by the gamma and epsilon chains, while a peripheral stalk is formed by the delta and b chains.

It localises to the cell inner membrane. Key component of the proton channel; it plays a direct role in the translocation of protons across the membrane. The chain is ATP synthase subunit a from Shewanella denitrificans (strain OS217 / ATCC BAA-1090 / DSM 15013).